A 150-amino-acid chain; its full sequence is Large ribosomal subunit protein bL9 (150 aa).

Belongs to the bacterial ribosomal protein bL9 family.

In terms of biological role, binds to the 23S rRNA. The chain is Large ribosomal subunit protein bL9 from Streptococcus pneumoniae (strain CGSP14).